The following is a 131-amino-acid chain: Glycine cleavage system H protein (131 aa).

In terms of domain architecture, Lipoyl-binding spans 24-106 (RAIVGISDHA…YGEGWIMVIE (83 aa)). Lys-65 bears the N6-lipoyllysine mark.

The protein belongs to the GcvH family. The glycine cleavage system is composed of four proteins: P, T, L and H. The cofactor is (R)-lipoate.

In terms of biological role, the glycine cleavage system catalyzes the degradation of glycine. The H protein shuttles the methylamine group of glycine from the P protein to the T protein. This chain is Glycine cleavage system H protein, found in Xylella fastidiosa (strain 9a5c).